The sequence spans 587 residues: Sulfite reductase [NADPH] hemoprotein beta-component (587 aa).

Over residues 1 to 13 (MQSTDNDLSQSPP) the composition is skewed to polar residues. Residues 1 to 20 (MQSTDNDLSQSPPKLSADEQ) are disordered. Cys-439, Cys-445, Cys-484, and Cys-488 together coordinate [4Fe-4S] cluster. Cys-488 lines the siroheme pocket.

Belongs to the nitrite and sulfite reductase 4Fe-4S domain family. As to quaternary structure, alpha(8)-beta(8). The alpha component is a flavoprotein, the beta component is a hemoprotein. Siroheme is required as a cofactor. Requires [4Fe-4S] cluster as cofactor.

The enzyme catalyses hydrogen sulfide + 3 NADP(+) + 3 H2O = sulfite + 3 NADPH + 4 H(+). Its pathway is sulfur metabolism; hydrogen sulfide biosynthesis; hydrogen sulfide from sulfite (NADPH route): step 1/1. Component of the sulfite reductase complex that catalyzes the 6-electron reduction of sulfite to sulfide. This is one of several activities required for the biosynthesis of L-cysteine from sulfate. This Bordetella petrii (strain ATCC BAA-461 / DSM 12804 / CCUG 43448) protein is Sulfite reductase [NADPH] hemoprotein beta-component.